The sequence spans 456 residues: GTPase Der (456 aa).

EngA-type G domains follow at residues 4–169 and 178–353; these read PVVA…PSKD and VQLA…DQSR. GTP is bound by residues 10-17, 57-61, 120-123, 184-191, 231-235, and 296-299; these read GRPNVGKS, DTGGL, NKCE, DTAGI, and NKWD. The region spanning 354–439 is the KH-like domain; that stretch reads RRVTTSVVNE…PIKLFWRGKQ (86 aa).

The protein belongs to the TRAFAC class TrmE-Era-EngA-EngB-Septin-like GTPase superfamily. EngA (Der) GTPase family. Associates with the 50S ribosomal subunit.

Its function is as follows. GTPase that plays an essential role in the late steps of ribosome biogenesis. This Prochlorococcus marinus (strain NATL1A) protein is GTPase Der.